Here is a 310-residue protein sequence, read N- to C-terminus: 4-hydroxyproline 2-epimerase (310 aa).

The active-site Proton acceptor is the Cys88. Substrate is bound by residues 89-90 (GH), His208, and Asp232. Cys236 acts as the Proton donor in catalysis. 237 to 238 (GT) lines the substrate pocket.

This sequence belongs to the proline racemase family.

The enzyme catalyses trans-4-hydroxy-L-proline = cis-4-hydroxy-D-proline. Catalyzes the epimerization of trans-4-hydroxy-L-proline (t4LHyp) to cis-4-hydroxy-D-proline (c4DHyp). Is likely involved in a degradation pathway that converts t4LHyp to alpha-ketoglutarate. Displays no proline racemase activity. This chain is 4-hydroxyproline 2-epimerase, found in Acinetobacter baumannii (strain AYE).